The following is a 141-amino-acid chain: Universal stress protein A homolog (141 aa).

Belongs to the universal stress protein A family. In terms of assembly, homodimer.

The protein resides in the cytoplasm. Functionally, required for resistance to DNA-damaging agents. This is Universal stress protein A homolog (uspA) from Haemophilus influenzae (strain ATCC 51907 / DSM 11121 / KW20 / Rd).